The following is a 1361-amino-acid chain: Zinc finger protein GLI4 (1361 aa).

The segment at 185 to 270 (SSFGHTPLLH…PQPPDHLTDL (86 aa)) is disordered. 2 stretches are compositionally biased toward polar residues: residues 198–208 (TFASRQQGALT) and 227–241 (NKVS…TVNQ). 5 consecutive C2H2-type zinc fingers follow at residues 289-314 (TNCH…NNDH), 322-349 (FVCR…MRRH), 355-379 (HKCT…LRSH), 385-410 (YVCD…NRTH), and 416-441 (YICK…KTVH). Disordered regions lie at residues 434–527 (RKHV…TNNI), 556–584 (STVS…GTAE), 647–720 (NERR…LPNL), 787–832 (NAGL…SMNS), 906–946 (QNRE…APGA), and 1134–1230 (DGLH…PKDN). Over residues 475–502 (SGREHSDSVSRDQEHCLQTRTIKTEDNM) the composition is skewed to basic and acidic residues. The segment covering 506 to 522 (SSPGGQSSCSSEPSPYG) has biased composition (low complexity). Over residues 573 to 584 (QRIHSAETGTAE) the composition is skewed to basic and acidic residues. A compositionally biased stretch (low complexity) spans 653 to 670 (TSSTLSSAYTSRRSSGIS). Composition is skewed to polar residues over residues 672–695 (YFSS…SSAD) and 710–720 (EASQHSGLPNL). The segment covering 805–821 (RASDPVRRTAGIDDKPL) has biased composition (basic and acidic residues). 2 stretches are compositionally biased toward polar residues: residues 913-939 (QNLQ…NTPE) and 1142-1164 (YTVQ…SGQA). Over residues 1172 to 1183 (PRPPAAPHPPNR) the composition is skewed to pro residues.

It belongs to the GLI C2H2-type zinc-finger protein family.

The protein resides in the nucleus. Its function is as follows. Has an essential role in the early embryonic patterning of mesoderm and neuroectoderm. This is Zinc finger protein GLI4 (gli4) from Xenopus laevis (African clawed frog).